Consider the following 95-residue polypeptide: Progonadoliberin-1 (95 aa).

A signal peptide spans 1 to 23 (MAPQTSNLWLLLVVMMVMSQGCC). Gln-24 bears the Pyrrolidone carboxylic acid mark. Residue Gly-33 is modified to Glycine amide.

Belongs to the GnRH family.

The protein resides in the secreted. Functionally, stimulates the secretion of gonadotropins. The protein is Progonadoliberin-1 (gnrh1) of Pagrus major (Red sea bream).